The following is a 123-amino-acid chain: Protein HesB, heterocyst (123 aa).

Belongs to the HesB/IscA family.

In terms of biological role, may be required for efficient nitrogen fixation. This is Protein HesB, heterocyst (hesB1) from Trichormus variabilis (strain ATCC 29413 / PCC 7937) (Anabaena variabilis).